The primary structure comprises 122 residues: NADH-quinone oxidoreductase subunit A (122 aa).

Transmembrane regions (helical) follow at residues 12–32 (ILLFILVGLAIGVLSMLAGWL), 67–87 (IAILFILFDLEIAFLFPWAVV), and 91–111 (IGWFGFVAMLVFLGLLVVGFI).

This sequence belongs to the complex I subunit 3 family. As to quaternary structure, NDH-1 is composed of 14 different subunits. Subunits NuoA, H, J, K, L, M, N constitute the membrane sector of the complex.

It localises to the cell inner membrane. The enzyme catalyses a quinone + NADH + 5 H(+)(in) = a quinol + NAD(+) + 4 H(+)(out). NDH-1 shuttles electrons from NADH, via FMN and iron-sulfur (Fe-S) centers, to quinones in the respiratory chain. The immediate electron acceptor for the enzyme in this species is believed to be ubiquinone. Couples the redox reaction to proton translocation (for every two electrons transferred, four hydrogen ions are translocated across the cytoplasmic membrane), and thus conserves the redox energy in a proton gradient. The sequence is that of NADH-quinone oxidoreductase subunit A from Nitrosomonas europaea (strain ATCC 19718 / CIP 103999 / KCTC 2705 / NBRC 14298).